We begin with the raw amino-acid sequence, 767 residues long: DNA topoisomerase 1 (767 aa).

The span at 1–23 shows a compositional bias: basic and acidic residues; it reads MSGDHLHNDSQIEADFRLNDSHK. The interval 1-200 is disordered; sequence MSGDHLHNDS…DNKKKKAKKE (200 aa). The residue at position 2 (Ser2) is an N-acetylserine. Ser2 and Ser10 each carry phosphoserine. A compositionally biased stretch (basic residues) spans 24-39; it reads HKDKHKDREHRHKEHK. The segment covering 40-110 has biased composition (basic and acidic residues); the sequence is KDKDKDREKS…DAKIKKEKEN (71 aa). Residue Ser59 is modified to Phosphoserine. Lys103 participates in a covalent cross-link: Glycyl lysine isopeptide (Lys-Gly) (interchain with G-Cter in SUMO2). Lys105 participates in a covalent cross-link: Glycyl lysine isopeptide (Lys-Gly) (interchain with G-Cter in SUMO); alternate. Lys105 participates in a covalent cross-link: Glycyl lysine isopeptide (Lys-Gly) (interchain with G-Cter in SUMO2); alternate. At Ser114 the chain carries Phosphoserine. Residue Lys119 forms a Glycyl lysine isopeptide (Lys-Gly) (interchain with G-Cter in SUMO); alternate linkage. Lys119 participates in a covalent cross-link: Glycyl lysine isopeptide (Lys-Gly) (interchain with G-Cter in SUMO2); alternate. Lys119 is covalently cross-linked (Glycyl lysine isopeptide (Lys-Gly) (interchain with G-Cter in SUMO1); alternate). A compositionally biased stretch (basic and acidic residues) spans 131–168; sequence PKEDIKPLKRPRDEDDADYKPKKIKTEDIKKEKKRKLE. Residues Lys136 and Lys150 each participate in a glycyl lysine isopeptide (Lys-Gly) (interchain with G-Cter in SUMO2) cross-link. A Glycyl lysine isopeptide (Lys-Gly) (interchain with G-Cter in SUMO); alternate cross-link involves residue Lys155. Lys155 participates in a covalent cross-link: Glycyl lysine isopeptide (Lys-Gly) (interchain with G-Cter in SUMO2); alternate. Residues Lys160 and Lys166 each participate in a glycyl lysine isopeptide (Lys-Gly) (interchain with G-Cter in SUMO2) cross-link. A Glycyl lysine isopeptide (Lys-Gly) (interchain with G-Cter in SUMO2); alternate cross-link involves residue Lys174. Lys174 is subject to N6-acetyllysine; alternate. Residues 181–200 are compositionally biased toward basic and acidic residues; it reads KDKDKKVAEPDNKKKKAKKE. Residue Lys206 forms a Glycyl lysine isopeptide (Lys-Gly) (interchain with G-Cter in SUMO2) linkage. Position 282 is an N6-acetyllysine (Lys282). Residue Lys338 forms a Glycyl lysine isopeptide (Lys-Gly) (interchain with G-Cter in SUMO2) linkage. 2 interaction with DNA regions span residues 427 to 428 and 490 to 495; these read KY and RAGNEK. The Topo IB-type catalytic domain occupies 434-767; that stretch reads SSRIKGEKDW…IDMTDEDYEF (334 aa). A Phosphoserine; by CK2 modification is found at Ser508. A Glycyl lysine isopeptide (Lys-Gly) (interchain with G-Cter in SUMO2) cross-link involves residue Lys551. Residues 587–589 are interaction with DNA; it reads TAK. Residues Lys644, Lys702, and Lys714 each participate in a glycyl lysine isopeptide (Lys-Gly) (interchain with G-Cter in SUMO2) cross-link. Residue Tyr725 is the O-(3'-phospho-DNA)-tyrosine intermediate of the active site.

The protein belongs to the type IB topoisomerase family. In terms of assembly, monomer. Interacts with ERCC6. Interacts with TPRN; TPRN interacts with a number of DNA damage response proteins, is recruited to sites of DNA damage and may play a role in DNA damage repair. In terms of processing, sumoylated. Lys-119 is the main site of sumoylation. Sumoylation plays a role in partitioning TOP1 between nucleoli and nucleoplasm. Levels are dramatically increased on camptothecin (CPT) treatment. Phosphorylation at Ser-508 by CK2 increases binding to supercoiled DNA and sensitivity to camptothecin.

The protein resides in the nucleus. Its subcellular location is the nucleolus. It is found in the nucleoplasm. It catalyses the reaction ATP-independent breakage of single-stranded DNA, followed by passage and rejoining.. Its function is as follows. Releases the supercoiling and torsional tension of DNA introduced during the DNA replication and transcription by transiently cleaving and rejoining one strand of the DNA duplex. Introduces a single-strand break via transesterification at a target site in duplex DNA. The scissile phosphodiester is attacked by the catalytic tyrosine of the enzyme, resulting in the formation of a DNA-(3'-phosphotyrosyl)-enzyme intermediate and the expulsion of a 5'-OH DNA strand. The free DNA strand then rotates around the intact phosphodiester bond on the opposing strand, thus removing DNA supercoils. Finally, in the religation step, the DNA 5'-OH attacks the covalent intermediate to expel the active-site tyrosine and restore the DNA phosphodiester backbone. Regulates the alternative splicing of tissue factor (F3) pre-mRNA in endothelial cells. Involved in the circadian transcription of the core circadian clock component BMAL1 by altering the chromatin structure around the ROR response elements (ROREs) on the BMAL1 promoter. In Rattus norvegicus (Rat), this protein is DNA topoisomerase 1 (Top1).